The sequence spans 438 residues: Keratin, type I cytoskeletal 13 (438 aa).

Positions 1–95 (MSCRFQSSSM…SVDGGLLSGN (95 aa)) are head. Residues Arg27 and Arg35 each carry the omega-N-methylarginine modification. The coil stretch occupies residues 96-131 (EKITMQNLNDRLASYLEKVRALEAANADLEVKIRDW). In terms of domain architecture, IF rod spans 96–408 (EKITMQNLND…SLLEGQDAKM (313 aa)). Positions 132–150 (HLKQSPTSPERDYSAYYKT) are linker 1. Residues 151 to 242 (IEELRIKILE…KNHEEEMKEF (92 aa)) form a coil 1B region. A linker 12 region spans residues 243 to 265 (SNQAVGQVNVEMDATPGIDLTRV). Positions 266-404 (LAEMREQYEA…ATYRSLLEGQ (139 aa)) are coil 2. A tail region spans residues 405–438 (DAKMTGFNTGGNSTTTSNTSTSPSTSGRPDFRKY). A disordered region spans residues 408–438 (MTGFNTGGNSTTTSNTSTSPSTSGRPDFRKY). The segment covering 409–431 (TGFNTGGNSTTTSNTSTSPSTSG) has biased composition (low complexity).

Belongs to the intermediate filament family. Heterotetramer of two type I and two type II keratins. In terms of processing, O-glycosylated; glycans consist of single N-acetylglucosamine residues.

Its function is as follows. Type 1 keratin. Maintains postnatal tongue mucosal cell homeostasis and tissue organization in response to mechanical stress, potentially via regulation of the G1/S phase cyclins CCNE1 and CCNE2. The chain is Keratin, type I cytoskeletal 13 from Rattus norvegicus (Rat).